The chain runs to 804 residues: Ribonucleoside-diphosphate reductase large subunit-like protein (804 aa).

This sequence belongs to the ribonucleoside diphosphate reductase large chain family.

It is found in the virion. The protein localises to the host cytoplasm. Does not possess a ribonucleotide reductase activity. Betaherpesviruses probably use another strategy to expand the dNTP pool in a quiescent host cell. The polypeptide is Ribonucleoside-diphosphate reductase large subunit-like protein (Homo sapiens (Human)).